A 141-amino-acid polypeptide reads, in one-letter code: Large ribosomal subunit protein uL11 (141 aa).

Belongs to the universal ribosomal protein uL11 family. In terms of assembly, part of the ribosomal stalk of the 50S ribosomal subunit. Interacts with L10 and the large rRNA to form the base of the stalk. L10 forms an elongated spine to which L12 dimers bind in a sequential fashion forming a multimeric L10(L12)X complex. In terms of processing, one or more lysine residues are methylated.

Functionally, forms part of the ribosomal stalk which helps the ribosome interact with GTP-bound translation factors. This is Large ribosomal subunit protein uL11 from Pediococcus pentosaceus (strain ATCC 25745 / CCUG 21536 / LMG 10740 / 183-1w).